The following is a 492-amino-acid chain: 2,3-bisphosphoglycerate-independent phosphoglycerate mutase (492 aa).

Positions 11 and 61 each coordinate Mn(2+). Serine 61 (phosphoserine intermediate) is an active-site residue. Residues histidine 118, 147 to 148 (RD), arginine 178, arginine 184, 248 to 251 (RNDR), and lysine 320 each bind substrate. Mn(2+)-binding residues include aspartate 386, histidine 390, aspartate 427, histidine 428, and histidine 445.

This sequence belongs to the BPG-independent phosphoglycerate mutase family. Monomer. It depends on Mn(2+) as a cofactor.

The catalysed reaction is (2R)-2-phosphoglycerate = (2R)-3-phosphoglycerate. Its pathway is carbohydrate degradation; glycolysis; pyruvate from D-glyceraldehyde 3-phosphate: step 3/5. In terms of biological role, catalyzes the interconversion of 2-phosphoglycerate and 3-phosphoglycerate. This is 2,3-bisphosphoglycerate-independent phosphoglycerate mutase from Campylobacter jejuni subsp. doylei (strain ATCC BAA-1458 / RM4099 / 269.97).